The following is a 500-amino-acid chain: Histidine ammonia-lyase (500 aa).

Positions Ala141–Gly143 form a cross-link, 5-imidazolinone (Ala-Gly). Ser142 bears the 2,3-didehydroalanine (Ser) mark.

It belongs to the PAL/histidase family. In terms of processing, contains an active site 4-methylidene-imidazol-5-one (MIO), which is formed autocatalytically by cyclization and dehydration of residues Ala-Ser-Gly.

It localises to the cytoplasm. It carries out the reaction L-histidine = trans-urocanate + NH4(+). Its pathway is amino-acid degradation; L-histidine degradation into L-glutamate; N-formimidoyl-L-glutamate from L-histidine: step 1/3. In Shouchella clausii (strain KSM-K16) (Alkalihalobacillus clausii), this protein is Histidine ammonia-lyase.